Here is a 334-residue protein sequence, read N- to C-terminus: HTH-type transcriptional repressor PurR (334 aa).

An HTH lacI-type domain is found at 2-56 (ATIKDVARLAGVSTTTVSHVINKTRFVAEATQEKVNKAVDELNYAPSAVARSLKC). The H-T-H motif DNA-binding region spans 4–23 (IKDVARLAGVSTTTVSHVIN). The DNA-binding element occupies 48-56 (SAVARSLKC). Phenylalanine 73, lysine 189, phenylalanine 220, and aspartate 274 together coordinate hypoxanthine.

As to quaternary structure, homodimer.

Its pathway is purine metabolism; purine nucleotide biosynthesis [regulation]. Its function is as follows. Is the main repressor of the genes involved in the de novo synthesis of purine nucleotides, regulating purB, purC, purEK, purF, purHD, purL, purMN and guaBA expression. PurR is allosterically activated to bind its cognate DNA by binding the purine corepressors, hypoxanthine or guanine, thereby effecting transcription repression. The sequence is that of HTH-type transcriptional repressor PurR from Vibrio atlanticus (strain LGP32) (Vibrio splendidus (strain Mel32)).